The sequence spans 89 residues: Small ribosomal subunit protein uS15 (89 aa).

It belongs to the universal ribosomal protein uS15 family. In terms of assembly, part of the 30S ribosomal subunit. Forms a bridge to the 50S subunit in the 70S ribosome, contacting the 23S rRNA.

In terms of biological role, one of the primary rRNA binding proteins, it binds directly to 16S rRNA where it helps nucleate assembly of the platform of the 30S subunit by binding and bridging several RNA helices of the 16S rRNA. Its function is as follows. Forms an intersubunit bridge (bridge B4) with the 23S rRNA of the 50S subunit in the ribosome. The polypeptide is Small ribosomal subunit protein uS15 (Roseiflexus sp. (strain RS-1)).